A 710-amino-acid polypeptide reads, in one-letter code: Mitochondrial intermediate peptidase (710 aa).

The N-terminal 33 residues, 1–33 (MLLAAGTRYAYRLCGRRAAAALQGRAGRSCARS), are a transit peptide targeting the mitochondrion. Lys124 is subject to N6-acetyllysine. His492 contributes to the Zn(2+) binding site. Residue Glu493 is part of the active site. The Zn(2+) site is built by His496 and His499.

This sequence belongs to the peptidase M3 family. Monomer. Zn(2+) serves as cofactor.

It localises to the mitochondrion matrix. The enzyme catalyses Release of an N-terminal octapeptide as second stage of processing of some proteins imported into the mitochondrion.. Its activity is regulated as follows. Activity is divalent cation-dependent. It is stimulated by manganese, magnesium or calcium ions and reversibly inhibited by zinc, cobalt and iron. In terms of biological role, cleaves proteins, imported into the mitochondrion, to their mature size. The sequence is that of Mitochondrial intermediate peptidase (Mipep) from Rattus norvegicus (Rat).